A 227-amino-acid chain; its full sequence is Lipoprotein-releasing system ATP-binding protein LolD (227 aa).

The ABC transporter domain maps to Leu-6–Arg-227. Position 43–50 (Ala-43–Ser-50) interacts with ATP.

It belongs to the ABC transporter superfamily. Lipoprotein translocase (TC 3.A.1.125) family. As to quaternary structure, the complex is composed of two ATP-binding proteins (LolD) and two transmembrane proteins (LolC and LolE).

The protein resides in the cell inner membrane. In terms of biological role, part of the ABC transporter complex LolCDE involved in the translocation of mature outer membrane-directed lipoproteins, from the inner membrane to the periplasmic chaperone, LolA. Responsible for the formation of the LolA-lipoprotein complex in an ATP-dependent manner. This chain is Lipoprotein-releasing system ATP-binding protein LolD, found in Ruegeria sp. (strain TM1040) (Silicibacter sp.).